The primary structure comprises 274 residues: Shikimate dehydrogenase (NADP(+)) (274 aa).

Shikimate contacts are provided by residues Ser-14–Ser-16 and Thr-61. The Proton acceptor role is filled by Lys-65. 2 residues coordinate shikimate: Asn-86 and Asp-102. NADP(+) is bound by residues Gly-126–Ala-130, Asn-150–Lys-155, and Met-214. Residue Tyr-216 coordinates shikimate. Position 239 (Gly-239) interacts with NADP(+).

Belongs to the shikimate dehydrogenase family. Homodimer.

It catalyses the reaction shikimate + NADP(+) = 3-dehydroshikimate + NADPH + H(+). It functions in the pathway metabolic intermediate biosynthesis; chorismate biosynthesis; chorismate from D-erythrose 4-phosphate and phosphoenolpyruvate: step 4/7. Functionally, involved in the biosynthesis of the chorismate, which leads to the biosynthesis of aromatic amino acids. Catalyzes the reversible NADPH linked reduction of 3-dehydroshikimate (DHSA) to yield shikimate (SA). This Pseudoalteromonas translucida (strain TAC 125) protein is Shikimate dehydrogenase (NADP(+)).